We begin with the raw amino-acid sequence, 486 residues long: Transcription factor VOZ1 (486 aa).

Positions 208–405 (PPSAFLGPKC…VDGKKTSKGK (198 aa)) are VOZ. Zn(2+) is bound by residues Cys-217, Cys-222, Cys-236, and His-240. The C3H1-type; atypical zinc finger occupies 217–240 (CALWDCPRPAQGFDWFQDYCSSFH). The tract at residues 424 to 445 (EFPPENNTTNTTNNNKRCIKGR) is disordered. A compositionally biased stretch (low complexity) spans 429–438 (NNTTNTTNNN).

In terms of assembly, homodimer. Interacts with phytochrome B (phyB). Ubiquitous. Expressed in the vascular bundles of various tissues, specifically in the phloem.

The protein localises to the cytoplasm. It is found in the nucleus. In terms of biological role, transcriptional activator acting positively in the phytochrome B signaling pathway. Functions redundantly with VOZ2 to promote flowering downstream of phytochrome B (phyB). Down-regulates 'FLOWERING LOCUS C' (FLC) and up-regulates 'FLOWERING LOCUS T' (FT). Binds to the 38-bp cis-acting region of the AVP1 gene. Interacts with phyB in the cytoplasm and is translocated to the nucleus at signal transmission, where it is subjected to degradation in a phytochrome-dependent manner. In Arabidopsis thaliana (Mouse-ear cress), this protein is Transcription factor VOZ1 (VOZ1).